Reading from the N-terminus, the 925-residue chain is Periplasmic nitrate reductase (925 aa).

Residues 1-30 (MDRREFIKSSAAAAACSAAGIAVPSSLSAA) constitute a signal peptide (tat-type signal). The region spanning 36 to 92 (WRWDKSACRFCGTGCGIMVATKNGKIVAVKGDPLAPVNRGLNCIKGYFNAKIMYGED) is the 4Fe-4S Mo/W bis-MGD-type domain. The [4Fe-4S] cluster site is built by cysteine 43, cysteine 46, cysteine 50, and cysteine 78. Mo-bis(molybdopterin guanine dinucleotide)-binding positions include lysine 80, glutamine 148, asparagine 173, cysteine 177, 210–217 (WGANMAEM), methionine 418, glutamine 422, asparagine 528, 553–554 (SD), lysine 576, aspartate 603, and 815–824 (TGRVLEHWHS). Residue tryptophan 891 participates in substrate binding. Positions 899 and 916 each coordinate Mo-bis(molybdopterin guanine dinucleotide).

It belongs to the prokaryotic molybdopterin-containing oxidoreductase family. NasA/NapA/NarB subfamily. Component of the periplasmic nitrate reductase NapAB complex composed of NapA and NapB. It depends on [4Fe-4S] cluster as a cofactor. Mo-bis(molybdopterin guanine dinucleotide) serves as cofactor. Post-translationally, predicted to be exported by the Tat system. The position of the signal peptide cleavage has not been experimentally proven.

The protein resides in the periplasm. The catalysed reaction is 2 Fe(II)-[cytochrome] + nitrate + 2 H(+) = 2 Fe(III)-[cytochrome] + nitrite + H2O. Catalytic subunit of the periplasmic nitrate reductase complex NapAB. Receives electrons from NapB and catalyzes the reduction of nitrate to nitrite. In Campylobacter fetus subsp. fetus (strain 82-40), this protein is Periplasmic nitrate reductase.